We begin with the raw amino-acid sequence, 336 residues long: Terephthalate 1,2-dioxygenase, reductase component 1 (336 aa).

The 2Fe-2S ferredoxin-type domain maps to 3-91 (HQIHIHDSDI…DIRIQPSSFR (89 aa)). Residues Cys37, Cys42, Cys45, and Cys75 each contribute to the [2Fe-2S] cluster site. Residues 98–197 (RKRFTAKVYS…ELPFGSIALK (100 aa)) enclose the FAD-binding FR-type domain.

As to quaternary structure, monomer. Part of a multicomponent enzyme system composed of a reductase (TphA1I or TphA1II) and a two-subunit oxygenase component (TphA2I or TphA2II and TphA3I or TphA3II). It depends on FAD as a cofactor. Requires [2Fe-2S] cluster as cofactor.

The catalysed reaction is terephthalate + NADH + O2 + H(+) = (3S,4R)-3,4-dihydroxycyclohexa-1,5-diene-1,4-dicarboxylate + NAD(+). Component of the terephthalate 1,2-dioxygenase multicomponent enzyme system which catalyzes the dioxygenation of terephthalate (TER/TPA) to 1,2-dihydroxy-3,5-cyclohexadiene-1,4-dicarboxylic acid (DCD). TphA1 probably reduces TphA2A3. It can also use 2,5-dicarboxypyridine (PDC) and 1,4-napthalenedicarboxylic acid (NDC) as substrates, and preferentially uses NADPH which is the physiological electron donor. This chain is Terephthalate 1,2-dioxygenase, reductase component 1 (tphA1I), found in Comamonas sp.